The primary structure comprises 454 residues: F-box/WD repeat-containing protein 2 (454 aa).

Positions 54 to 101 (RDFLKLLPLELSFYLLKWLDPQTLLTCCLVSKQWNKVISACTEVWQTA) constitute an F-box domain. 7 WD repeats span residues 139–175 (FETSSLIGHSARVYALYYKDGLLCTGSDDLSAKLWDV), 179–213 (QCVYGIQTHTCAAVKFDEQKLVTGSFDNTVACWEW), 217–255 (ARTQHFRGHTGAVFSVDYNDELDILVSGSADFTVKVWAL), 259–306 (TCLN…IWPI), 313–352 (KCLKTLSVSEDRSICLQPRLHFDGKYIVCSSALGLYQWDF), 364–403 (PEIANLALLGFGDIFALLFDNRYLYIMDLRTESLISRWPL), and 410–452 (KRGS…LWKE). At Lys298 the chain carries N6-acetyllysine.

Directly interacts with SKP1 and CUL1.

Its function is as follows. Substrate-recognition component of the SCF (SKP1-CUL1-F-box protein)-type E3 ubiquitin ligase complex. The protein is F-box/WD repeat-containing protein 2 (FBXW2) of Homo sapiens (Human).